Here is a 1014-residue protein sequence, read N- to C-terminus: Probable sucrose-phosphate synthase 5 (1014 aa).

2 stretches are compositionally biased toward basic and acidic residues: residues 29 to 41 and 49 to 58; these read RRLEQELGSREAA and EGEKDGKPDT. Disordered regions lie at residues 29-108 and 648-677; these read RRLE…SDEE and QLLRVPPSPSSSSAAAAAAGGGGAAASSEP.

This sequence belongs to the glycosyltransferase 1 family. In terms of assembly, homodimer or homotetramer. As to expression, expressed in germinating seeds.

The enzyme catalyses beta-D-fructose 6-phosphate + UDP-alpha-D-glucose = sucrose 6(F)-phosphate + UDP + H(+). It functions in the pathway glycan biosynthesis; sucrose biosynthesis; sucrose from D-fructose 6-phosphate and UDP-alpha-D-glucose: step 1/2. Activity is regulated by phosphorylation and moderated by concentration of metabolites and light. Functionally, plays a role in photosynthetic sucrose synthesis by catalyzing the rate-limiting step of sucrose biosynthesis from UDP-glucose and fructose- 6-phosphate. Involved in the regulation of carbon partitioning in the leaves of plants. May regulate the synthesis of sucrose and therefore play a major role as a limiting factor in the export of photoassimilates out of the leaf. Plays a role for sucrose availability that is essential for plant growth and fiber elongation. The polypeptide is Probable sucrose-phosphate synthase 5 (SPS5) (Oryza sativa subsp. japonica (Rice)).